A 235-amino-acid polypeptide reads, in one-letter code: MLTYQTWEAEEKPSFPHDNETKGALDVLTWAFRQYKDDIVYACSFGVEGIVLIDLISQVKPDAEIVFLDTGLHFRETYKTIEKVKEKYPSLRIVMKKPSLSLEEQAQQLGDELWKHNPNKCCELRKVIPLREALTGITAWISGLRREQSPTRSHVEYINKDDKFKSIKICPLIHWTWKDVWNYVYKRRLPYNVLHDRGYPSIGCEPCTSPALDPNDLRSGRWVGHGKTECGLHIS.

Residues Cys121, Cys122, Cys204, and Cys207 each coordinate [4Fe-4S] cluster. The active-site Nucleophile; cysteine thiosulfonate intermediate is Cys230.

Belongs to the PAPS reductase family. CysH subfamily. [4Fe-4S] cluster serves as cofactor.

It localises to the cytoplasm. The catalysed reaction is [thioredoxin]-disulfide + sulfite + AMP + 2 H(+) = adenosine 5'-phosphosulfate + [thioredoxin]-dithiol. Its pathway is sulfur metabolism; hydrogen sulfide biosynthesis; sulfite from sulfate. Functionally, catalyzes the formation of sulfite from adenosine 5'-phosphosulfate (APS) using thioredoxin as an electron donor. The chain is Adenosine 5'-phosphosulfate reductase from Geobacillus sp. (strain WCH70).